The following is a 206-amino-acid chain: Large ribosomal subunit protein uL4 (206 aa).

The disordered stretch occupies residues 47-77; that stretch reads GTHDTKTRGEVSGGGRKPWRQKGTGRARHGS. Residues 63 to 77 show a composition bias toward basic residues; sequence KPWRQKGTGRARHGS.

Belongs to the universal ribosomal protein uL4 family. As to quaternary structure, part of the 50S ribosomal subunit.

Functionally, one of the primary rRNA binding proteins, this protein initially binds near the 5'-end of the 23S rRNA. It is important during the early stages of 50S assembly. It makes multiple contacts with different domains of the 23S rRNA in the assembled 50S subunit and ribosome. Its function is as follows. Forms part of the polypeptide exit tunnel. This chain is Large ribosomal subunit protein uL4, found in Carboxydothermus hydrogenoformans (strain ATCC BAA-161 / DSM 6008 / Z-2901).